The sequence spans 672 residues: MAAEVLLSSLLGLLFLGLLLPARLTGGVGSLNLEELSEMRYGIQILPLPVMGGQSQASDVVVVSSKYKQRYECRLPAGAIHFQREREEETPAYQGPGIPELLSPMRDAPCLLKTKDWWTYEFCYGRHIQQYHMEDSEIKGDVLYLGHYQSSFNWDDETAKASKQHRLKRYHSQTYGNGSKCDLNGKPREAEVRFLCDEGAGISGDYIDRVDEPVSCSYVLTIRTSRLCPHPLLRPPASAAPQAILCHPALQPDEYMAYLQRQAESKQHEEKTTEEVQDTDRQVWSGSKAAGAPPKKEDVSPAKEEKESELWKLQGPEEQAAAREEAQAGEQDLNHEAAADPAPSPPNDFQNNVQVKLIRSPADLIRLIEELKAAEKGKPSVRREQPGDDTTEAPQREAEGTKAKGKDGEPPGLMEEEDGDDEEEEEEEEEDEEEQQLLGEFEKELEGMLLPSNRERLRSEVKAGMERELENIIQETEKELDPEGLRKESEREQAILALTSTLDKLIKRLQENQSPELVQKYKKRRVVPQKPPPSPHPTEEEPEHRVRVRVTKLRPGGPNRDLTVLEMNRENPQLKQIEGLVTEVLEREGLTAEGKIEIKIVRPGAEGKEEDTRWLTDEDTRNLKEIFFNILVQGAEEANKERQRQSELESNYRRVWGSPGGEDTGDLDEFDF.

An N-terminal signal peptide occupies residues 1 to 26 (MAAEVLLSSLLGLLFLGLLLPARLTG). The region spanning 108–230 (APCLLKTKDW…TIRTSRLCPH (123 aa)) is the MRH domain. Residues Cys-110 and Cys-123 are joined by a disulfide bond. Residues Trp-117, Trp-118, and Gln-130 each contribute to the a mannooligosaccharide derivative site. N-linked (GlcNAc...) asparagine glycosylation is present at Asn-177. 2 cysteine pairs are disulfide-bonded: Cys-181-Cys-216 and Cys-196-Cys-228. 4 residues coordinate a mannooligosaccharide derivative: Asp-182, Arg-188, Glu-212, and Tyr-218. Disordered regions lie at residues 261–355 (RQAE…NVQV), 372–452 (KAAE…LLPS), 511–548 (ENQS…RVRV), and 637–672 (EANK…EFDF). Composition is skewed to basic and acidic residues over residues 263 to 281 (AESK…DTDR), 294 to 310 (PKKE…ESEL), 320 to 338 (AAAR…HEAA), 372 to 386 (KAAE…REQP), and 394 to 409 (PQRE…KDGE). A compositionally biased stretch (acidic residues) spans 414–435 (MEEEDGDDEEEEEEEEEDEEEQ). Basic and acidic residues predominate over residues 637 to 652 (EANKERQRQSELESNY). The span at 663–672 (DTGDLDEFDF) shows a compositional bias: acidic residues.

Belongs to the OS-9 family. Component of the HRD1 complex, which comprises at least SYNV1/HRD1, DERL1/2, FAM8A1, HERPUD1/HERP, OS9, SEL1L and UBE2J1. FAM8A1 is stabilized by interaction with SYNV1, which prevents its proteasomal degradation. OS9 and UBE2J1 recruitment to the complex may be mediated by SEL1L. Through this complex, may interact with ERLEC1 and HSPA5. Interacts (via C-terminus) with CPNE6 (via second C2 domain); this interaction occurs in a calcium-dependent manner in vitro. Interacts with CREB3. Post-translationally, N-glycosylated. Intramolecular disulfide bonds.

The protein resides in the endoplasmic reticulum lumen. Its function is as follows. Lectin component of the HRD1 complex, which functions in endoplasmic reticulum (ER) quality control and ER-associated degradation (ERAD). Specifically recognizes and binds improperly folded glycoproteins as well as hyperglycosylated proteins, retain them in the ER, and transfers them to the ubiquitination machinery and promote their degradation. Possible targets include TRPV4 as well as hyperglycosylated HSP90B1. This is Protein OS-9 (Os9) from Mus musculus (Mouse).